The sequence spans 86 residues: Small nuclear ribonucleoprotein F (86 aa).

Residues 14–86 enclose the Sm domain; that stretch reads NPKPFLKGLV…NVLYIRELPN (73 aa).

The protein belongs to the snRNP Sm proteins family. SmF/LSm6 subfamily. As to quaternary structure, component of the Sm core complex, present in spliceosomal snRNP U1, U2, U4/U6 and U5. The core complex contains SMB1, SMD1, SMD2, SMD3, SME1, SMX3 and SMX2 (Sm proteins B, D1, D2, D3, E, F and G, respectively), and is probably a heptameric ring structure. SMX3 specifically interacts with SME1. Belongs to the CWC complex (or CEF1-associated complex), a spliceosome sub-complex reminiscent of a late-stage spliceosome composed of the U2, U5 and U6 snRNAs and at least BUD13, BUD31, BRR2, CDC40, CEF1, CLF1, CUS1, CWC2, CWC15, CWC21, CWC22, CWC23, CWC24, CWC25, CWC27, ECM2, HSH155, IST3, ISY1, LEA1, MSL1, NTC20, PRP8, PRP9, PRP11, PRP19, PRP21, PRP22, PRP45, PRP46, SLU7, SMB1, SMD1, SMD2, SMD3, SMX2, SMX3, SNT309, SNU114, SPP2, SYF1, SYF2, RSE1 and YJU2. Component of the U4/U6-U5 tri-snRNP complex composed of the U4, U6 and U5 snRNAs and at least PRP3, PRP4, PRP6, PRP8, PRP18, PRP31, PRP38, SNU13, SNU23, SNU66, SNU114, SPP381, SMB1, SMD1, SMD2, SMD3, SMX2, SMX3, LSM2, LSM3, LSM4, LSM5, LSM6, LSM7, LSM8, BRR2 and DIB1.

Its subcellular location is the nucleus. It localises to the cytoplasm. Plays a role in pre-mRNA splicing as a core component of the spliceosomal U1, U2, U4 and U5 small nuclear ribonucleoproteins (snRNPs), the building blocks of the spliceosome. This is Small nuclear ribonucleoprotein F (SMX3) from Saccharomyces cerevisiae (strain ATCC 204508 / S288c) (Baker's yeast).